A 365-amino-acid polypeptide reads, in one-letter code: MSLEEKKKPESKEKDKALSLVLGQIERNFGRGSIMRLGDASRMKVETISTGALTLDLALGGGYPKGRVVEVYGPESSGKTTLTLHAIAEVQKNGGVAAFVDAEHALDPVYAASLGVDVENLLVSQPDTGEMALEIVDQLIRSSAVDLVVVDSVAALTPRAEIEGEMGDHVIGSQARLMSQAMRKITGNIGKSGCTVIFLNQLRLKIGVTYGNPETTTGGNALKFYASVRLDIRRIQTLKRGTEEYGIRAKVKVAKNKVAPPFRIAEFDILFGKGISTTGCLLDLAEETNIIIRRGAWYSYEGENIGQGRDNTIIWLDQNLEIRNKVESMVKEKLTEGTEVSSNSMKALNSNPANTIAVNDIKTVA.

ATP is bound at residue 73–80; the sequence is GPESSGKT.

It belongs to the RecA family.

The protein resides in the cytoplasm. Can catalyze the hydrolysis of ATP in the presence of single-stranded DNA, the ATP-dependent uptake of single-stranded DNA by duplex DNA, and the ATP-dependent hybridization of homologous single-stranded DNAs. It interacts with LexA causing its activation and leading to its autocatalytic cleavage. In Prochlorococcus marinus (strain MIT 9312), this protein is Protein RecA.